We begin with the raw amino-acid sequence, 350 residues long: Solute carrier family 35 member E4 (350 aa).

Helical transmembrane passes span 40–60 (VLGQPALARVVVAALVWLLAG), 79–99 (PLLLSALHMLAAAVACHWGAQ), 110–130 (VLLLSLTFGTSMACGNVGLST), 135–155 (LAQLATTTTPLFTLALSALLL), 218–238 (VTLLYATSLPSFCLLAGAALV), 258–278 (VLLSCFLSVVYNLASFSLLAL), 279–299 (TSALTVHVLGNLTVVGNLILS), and 301–321 (LLFGSHLSALSYVGIALTLSG). Residues 125–179 (NVGLSTVPLDLAQLATTTTPLFTLALSALLLGRRHHPLQFAAMGPLCLGAACSLA) enclose the EamA domain.

It belongs to the TPT transporter family. SLC35E subfamily.

It is found in the membrane. Functionally, putative transporter. The polypeptide is Solute carrier family 35 member E4 (Slc35e4) (Rattus norvegicus (Rat)).